An 854-amino-acid polypeptide reads, in one-letter code: Alkaline phosphatase-like protein PglZ (854 aa).

This sequence belongs to the alkaline phosphatase superfamily.

Its function is as follows. BREX systems (bacteriophage exclusion) provide immunity against bacteriophage. A core protein of a type 1 BREX system. This system allows phage adsorption but prevents phage DNA replication, without degradation of the phage DNA. Methylation of bacterial DNA by PglX probably guides self/non-self discrimination. When the brxA-brxB-brxC-pglX and pglZ-brxL operons are transformed into a susceptible B.subtilis strain (BEST7003) they confer resistance to bacteriophages SPbeta, SP16, Zeta, phi3T and SP02 and partial protection to phages SP01 and SP82G (these include lytic and temperate phage). They do not protect against phages phi105, rho10 or rho14. Additionally confers a very slight reduction in efficiency of plasmid transformation. This is Alkaline phosphatase-like protein PglZ from Bacillus cereus (strain H3081.97).